Reading from the N-terminus, the 551-residue chain is Rqc2 homolog RqcH (551 aa).

The interval 363–551 (YQKLKEAVKY…SKKIASMKKS (189 aa)) is required for fibronectin binding.

Belongs to the NEMF family. Associates with stalled 50S ribosomal subunits, binds to RqcP. Interacts with human fibronectin.

The protein localises to the cell surface. Its subcellular location is the cytoplasm. In terms of biological role, key component of the ribosome quality control system (RQC), a ribosome-associated complex that mediates the extraction of incompletely synthesized nascent chains from stalled ribosomes and their subsequent degradation. RqcH recruits Ala-charged tRNA, and with RqcP directs the elongation of stalled nascent chains on 50S ribosomal subunits, leading to non-templated C-terminal alanine extensions (Ala tail). The Ala tail promotes nascent chain degradation. May add between 1 and at least 8 Ala residues. Binds to stalled 50S ribosomal subunits. Functionally, recombinant protein binds to immobilized human fibronectin; binding is saturable and competed by heparin. Recombinant protein inhibits binding of whole cells to fibronectin. This chain is Rqc2 homolog RqcH, found in Streptococcus pneumoniae (strain ATCC BAA-255 / R6).